Consider the following 247-residue polypeptide: Carboxy-S-adenosyl-L-methionine synthase (247 aa).

Residues Tyr40, 65 to 67 (GAS), 90 to 91 (DN), 122 to 123 (DI), Asn137, and Arg204 each bind S-adenosyl-L-methionine.

Belongs to the class I-like SAM-binding methyltransferase superfamily. Cx-SAM synthase family. As to quaternary structure, homodimer.

It carries out the reaction prephenate + S-adenosyl-L-methionine = carboxy-S-adenosyl-L-methionine + 3-phenylpyruvate + H2O. Functionally, catalyzes the conversion of S-adenosyl-L-methionine (SAM) to carboxy-S-adenosyl-L-methionine (Cx-SAM). This is Carboxy-S-adenosyl-L-methionine synthase from Pseudomonas fluorescens (strain Pf0-1).